Reading from the N-terminus, the 249-residue chain is Enolase-phosphatase E1 (249 aa).

It belongs to the HAD-like hydrolase superfamily. MasA/MtnC family. Monomer. Mg(2+) is required as a cofactor.

The enzyme catalyses 5-methylsulfanyl-2,3-dioxopentyl phosphate + H2O = 1,2-dihydroxy-5-(methylsulfanyl)pent-1-en-3-one + phosphate. The protein operates within amino-acid biosynthesis; L-methionine biosynthesis via salvage pathway; L-methionine from S-methyl-5-thio-alpha-D-ribose 1-phosphate: step 3/6. It participates in amino-acid biosynthesis; L-methionine biosynthesis via salvage pathway; L-methionine from S-methyl-5-thio-alpha-D-ribose 1-phosphate: step 4/6. Functionally, bifunctional enzyme that catalyzes the enolization of 2,3-diketo-5-methylthiopentyl-1-phosphate (DK-MTP-1-P) into the intermediate 2-hydroxy-3-keto-5-methylthiopentenyl-1-phosphate (HK-MTPenyl-1-P), which is then dephosphorylated to form the acireductone 1,2-dihydroxy-3-keto-5-methylthiopentene (DHK-MTPene). The polypeptide is Enolase-phosphatase E1 (Synechococcus sp. (strain RCC307)).